Consider the following 341-residue polypeptide: Mitochondrial ubiquitin ligase activator of nfkb 1-A (341 aa).

The Cytoplasmic portion of the chain corresponds to 1–5 (MEDFP). A helical membrane pass occupies residues 6–26 (VLEMVCLGSSVALSGLFYYIY). Topologically, residues 27–233 (RKKRKTVDKL…LLMEQEGQAE (207 aa)) are mitochondrial intermembrane. Residues 234–254 (VWRVFACICALAGVAVLIWTG) form a helical membrane-spanning segment. Residues 255-341 (RRYYRQLKLR…IKRVVPLYQA (87 aa)) are Cytoplasmic-facing. The RING-type zinc-finger motif lies at 292-329 (CVICLSNPRGCVLLDCGHVCCCFRCYQALPQPFCPICR).

As to quaternary structure, homooligomer.

Its subcellular location is the mitochondrion outer membrane. The catalysed reaction is S-ubiquitinyl-[E2 ubiquitin-conjugating enzyme]-L-cysteine + [acceptor protein]-L-lysine = [E2 ubiquitin-conjugating enzyme]-L-cysteine + N(6)-ubiquitinyl-[acceptor protein]-L-lysine.. The protein operates within protein modification; protein ubiquitination. Its function is as follows. E3 ubiquitin-protein ligase that plays a role in the control of mitochondrial morphology. Promotes mitochondrial fragmentation and influences mitochondrial localization. Inhibits cell growth. E3 ubiquitin ligases accept ubiquitin from an E2 ubiquitin-conjugating enzyme in the form of a thioester and then directly transfer the ubiquitin to targeted substrates. In Danio rerio (Zebrafish), this protein is Mitochondrial ubiquitin ligase activator of nfkb 1-A (mul1a).